We begin with the raw amino-acid sequence, 388 residues long: CUE domain-containing protein 1 (388 aa).

Positions 1–10 are enriched in low complexity; that stretch reads MTSLFRRSSS. The segment at 1-45 is disordered; sequence MTSLFRRSSSGSGGGGATGARGAGTGAGDGSTAPQELNNSRPARQ. Positions 11 to 29 are enriched in gly residues; it reads GSGGGGATGARGAGTGAGD. The region spanning 50 to 93 is the CUE domain; the sequence is EFNQAMDDFKTMFPNMDYDIIECVLRANSGAVDATIDQLLQMNL. Disordered regions lie at residues 152 to 178, 196 to 225, 270 to 302, and 369 to 388; these read PTPP…WNPP, DSIQ…ACDQ, SQKS…TVSE, and DFRG…REGQ. A compositionally biased stretch (polar residues) spans 290 to 300; sequence VPGTSETNPTV.

This Mus musculus (Mouse) protein is CUE domain-containing protein 1 (Cuedc1).